Reading from the N-terminus, the 483-residue chain is O-acetyltransferase pboB (483 aa).

Belongs to the fumigaclavine B O-acetyltransferase family. As to quaternary structure, monomer.

Its pathway is secondary metabolite biosynthesis. Functionally, O-acetyltransferase; part of the gene cluster that mediates the biosynthesis of protubonine B, a hydroxylated and diacetylated cyclo-L-Trp-L-Leu derivative. Within the pathway, pboB catalyzes the acetylation of protubonine C at N-1 of the indoline ring to produce protubonine B. The first step of the protubonine B synthesis is performed by the nonribosomal peptide synthetase pboA that catalyzes the formation of cyclo-L-Trp-L-Leu by condensing L-Leu with L-Trp. The flavin-dependent monooxygenase pboD is responsible for hydroxylation at C-3 of the indole ring and subsequent formation of the pyrrolidine ring, leadind to protubonine D. Protubonine D is further diacetylated by two acetyltransferases, pboB and pboC, to form the final product protubonine B via protubonine C. The sequence is that of O-acetyltransferase pboB from Aspergillus ustus.